The following is a 344-amino-acid chain: Acireductone dioxygenase (344 aa).

Fe(2+) contacts are provided by His-92, His-94, Glu-98, and His-137. Residues His-92, His-94, Glu-98, and His-137 each contribute to the Ni(2+) site.

This sequence belongs to the acireductone dioxygenase (ARD) family. Requires Fe(2+) as cofactor. The cofactor is Ni(2+).

It localises to the cytoplasm. Its subcellular location is the nucleus. The enzyme catalyses 1,2-dihydroxy-5-(methylsulfanyl)pent-1-en-3-one + O2 = 4-methylsulfanyl-2-oxobutanoate + formate + 2 H(+). It catalyses the reaction 1,2-dihydroxy-5-(methylsulfanyl)pent-1-en-3-one + O2 = 3-(methylsulfanyl)propanoate + CO + formate + 2 H(+). Its pathway is amino-acid biosynthesis; L-methionine biosynthesis via salvage pathway; L-methionine from S-methyl-5-thio-alpha-D-ribose 1-phosphate: step 5/6. In terms of biological role, catalyzes 2 different reactions between oxygen and the acireductone 1,2-dihydroxy-3-keto-5-methylthiopentene (DHK-MTPene) depending upon the metal bound in the active site. Fe-containing acireductone dioxygenase (Fe-ARD) produces formate and 2-keto-4-methylthiobutyrate (KMTB), the alpha-ketoacid precursor of methionine in the methionine recycle pathway. Ni-containing acireductone dioxygenase (Ni-ARD) produces methylthiopropionate, carbon monoxide and formate, and does not lie on the methionine recycle pathway. The chain is Acireductone dioxygenase from Leishmania infantum.